A 948-amino-acid chain; its full sequence is Valine--tRNA ligase (948 aa).

The 'HIGH' region motif lies at 40 to 50 (PNVTGSLHMGH). Residues 551–555 (KMSKS) carry the 'KMSKS' region motif. K554 is an ATP binding site. Positions 879 to 945 (LIDKGAELAR…GKLAEQHARI (67 aa)) form a coiled coil.

The protein belongs to the class-I aminoacyl-tRNA synthetase family. ValS type 1 subfamily. Monomer.

It is found in the cytoplasm. It carries out the reaction tRNA(Val) + L-valine + ATP = L-valyl-tRNA(Val) + AMP + diphosphate. Functionally, catalyzes the attachment of valine to tRNA(Val). As ValRS can inadvertently accommodate and process structurally similar amino acids such as threonine, to avoid such errors, it has a 'posttransfer' editing activity that hydrolyzes mischarged Thr-tRNA(Val) in a tRNA-dependent manner. In Pseudomonas savastanoi pv. phaseolicola (strain 1448A / Race 6) (Pseudomonas syringae pv. phaseolicola (strain 1448A / Race 6)), this protein is Valine--tRNA ligase.